We begin with the raw amino-acid sequence, 638 residues long: Keratin, type II cytoskeletal 2 oral (638 aa).

Residues Met-1–Gln-182 are head. Arg-85 and Arg-110 each carry omega-N-methylarginine. The coil 1A stretch occupies residues Glu-183–Leu-218. Residues Glu-183–Met-496 form the IF rod domain. Residues Gln-219 to Tyr-237 are linker 1. The segment at Ile-238 to Met-329 is coil 1B. A linker 12 region spans residues Gln-330 to Ile-353. Residues Ile-354–Glu-492 are coil 2. The tract at residues Glu-493–Lys-638 is tail. The segment at Ser-532 to Lys-638 is disordered. The segment covering Gly-540 to Tyr-549 has biased composition (low complexity). Residues Gly-550–Ser-572 show a composition bias toward gly residues. The span at Ser-573–Ser-583 shows a compositional bias: low complexity. Position 584 is an omega-N-methylarginine (Arg-584). Positions Ser-590 to Ser-608 are enriched in low complexity. Residues Gly-609–Ser-620 are compositionally biased toward gly residues. The segment covering Ser-626–Lys-638 has biased composition (low complexity).

It belongs to the intermediate filament family. Heterotetramer of two type I and two type II keratins.

Its function is as follows. Probably contributes to terminal cornification. The sequence is that of Keratin, type II cytoskeletal 2 oral (KRT76) from Homo sapiens (Human).